A 435-amino-acid chain; its full sequence is 3-phosphoshikimate 1-carboxyvinyltransferase (435 aa).

Residues Lys-23, Ser-24, and Arg-28 each coordinate 3-phosphoshikimate. Lys-23 provides a ligand contact to phosphoenolpyruvate. Positions 96 and 124 each coordinate phosphoenolpyruvate. 6 residues coordinate 3-phosphoshikimate: Ser-167, Ser-168, Gln-169, Ser-196, Glu-311, and His-340. Gln-169 is a phosphoenolpyruvate binding site. The Proton acceptor role is filled by Glu-311. Arg-344, Arg-385, and Lys-410 together coordinate phosphoenolpyruvate.

It belongs to the EPSP synthase family. Monomer.

The protein localises to the cytoplasm. The enzyme catalyses 3-phosphoshikimate + phosphoenolpyruvate = 5-O-(1-carboxyvinyl)-3-phosphoshikimate + phosphate. Its pathway is metabolic intermediate biosynthesis; chorismate biosynthesis; chorismate from D-erythrose 4-phosphate and phosphoenolpyruvate: step 6/7. Catalyzes the transfer of the enolpyruvyl moiety of phosphoenolpyruvate (PEP) to the 5-hydroxyl of shikimate-3-phosphate (S3P) to produce enolpyruvyl shikimate-3-phosphate and inorganic phosphate. The sequence is that of 3-phosphoshikimate 1-carboxyvinyltransferase from Mycolicibacterium paratuberculosis (strain ATCC BAA-968 / K-10) (Mycobacterium paratuberculosis).